The sequence spans 120 residues: Large ribosomal subunit protein bL19 (120 aa).

This sequence belongs to the bacterial ribosomal protein bL19 family.

In terms of biological role, this protein is located at the 30S-50S ribosomal subunit interface and may play a role in the structure and function of the aminoacyl-tRNA binding site. This chain is Large ribosomal subunit protein bL19, found in Gloeothece citriformis (strain PCC 7424) (Cyanothece sp. (strain PCC 7424)).